Here is a 151-residue protein sequence, read N- to C-terminus: Protein SprT-like (151 aa).

One can recognise a SprT-like domain in the interval 6 to 148 (LQALVERISL…FCRGKLKKIK (143 aa)). Position 67 (H67) interacts with Zn(2+). E68 is a catalytic residue. H71 contacts Zn(2+).

Belongs to the SprT family. The cofactor is Zn(2+).

Its subcellular location is the cytoplasm. The polypeptide is Protein SprT-like (Anoxybacillus flavithermus (strain DSM 21510 / WK1)).